Reading from the N-terminus, the 431-residue chain is MAVLPTWLLAMMCLLFFVGAMENTTHDNISSLPRSDETEWNQHAVTNPDEVADEVLALTEMSVRNHTERRKLGYFTCGTGNPIDDCWRCDPNWHKNRKRLADCGIGFGRNAIGGRDGRFYVVTDPRDDNPVNPRPGTLRHAVIQDRPLWIVFKRDMVIQLKQELIVNSFKTIDGRGANVHIANGGCITIQFVTNVIVHGLHIHDCKPTGNAMVRSSETHFGWRTMADGDAISIFGSSHVWIDHNSLSHCADGLVDAVMGSTAITISNNHLTHHNEVMLLGHSDSYMRDKAMQVTIAYNHFGVGLIQRMPRCRHGYFHVVNNDYTHWEMYAIGGSANPTINSQGNRYAAPKNPFAKEVTKRVDTPASHWKGWNWRSEGDLLQNGAYFTSSGAAASGSYARASSLSAKSSSLVGHITSDAGALPCRRGRQCSS.

The signal sequence occupies residues 1 to 20 (MAVLPTWLLAMMCLLFFVGA). Residues Asn23, Asn28, and Asn65 are each glycosylated (N-linked (GlcNAc...) asparagine). Asp227, Asp251, and Asp255 together coordinate Ca(2+). Arg307 is an active-site residue.

Belongs to the polysaccharide lyase 1 family. Ca(2+) serves as cofactor. As to expression, expressed in flowers, but not in leaves.

It carries out the reaction Eliminative cleavage of (1-&gt;4)-alpha-D-galacturonan to give oligosaccharides with 4-deoxy-alpha-D-galact-4-enuronosyl groups at their non-reducing ends.. The protein operates within glycan metabolism; pectin degradation; 2-dehydro-3-deoxy-D-gluconate from pectin: step 2/5. This Arabidopsis thaliana (Mouse-ear cress) protein is Probable pectate lyase 1.